The sequence spans 401 residues: Exodeoxyribonuclease 7 large subunit (401 aa).

This sequence belongs to the XseA family. Heterooligomer composed of large and small subunits.

It is found in the cytoplasm. The catalysed reaction is Exonucleolytic cleavage in either 5'- to 3'- or 3'- to 5'-direction to yield nucleoside 5'-phosphates.. In terms of biological role, bidirectionally degrades single-stranded DNA into large acid-insoluble oligonucleotides, which are then degraded further into small acid-soluble oligonucleotides. The sequence is that of Exodeoxyribonuclease 7 large subunit from Clostridium botulinum (strain Hall / ATCC 3502 / NCTC 13319 / Type A).